The primary structure comprises 257 residues: MLKIADKQFHSRLFTGTGKFANSQLMSQAIEQSGSQLATMALKRVDIHNQQDDILSPLLSAGVNLLPNTSGAKNAKDAIFAAHLAREALGTNWLKLEIHPDPKYLMPDPIETLAAAEQLVKDGFVVLPYCHADPVLCKRLEEVGCAAVMPLGAPIGSNKGLVSQDFLQIIIDQAKVPVVVDAGIGAPSHAAYAMELGADAVLVNTAIAAARDPIAMARAFKLAVEAGRLAYESGLAGKVSHAVASSPLTSFLDECLS.

Catalysis depends on Lys-95, which acts as the Schiff-base intermediate with DXP. 1-deoxy-D-xylulose 5-phosphate contacts are provided by residues Gly-156, 182–183 (AG), and 204–205 (NT).

Belongs to the ThiG family. As to quaternary structure, homotetramer. Forms heterodimers with either ThiH or ThiS.

It is found in the cytoplasm. It carries out the reaction [ThiS sulfur-carrier protein]-C-terminal-Gly-aminoethanethioate + 2-iminoacetate + 1-deoxy-D-xylulose 5-phosphate = [ThiS sulfur-carrier protein]-C-terminal Gly-Gly + 2-[(2R,5Z)-2-carboxy-4-methylthiazol-5(2H)-ylidene]ethyl phosphate + 2 H2O + H(+). It functions in the pathway cofactor biosynthesis; thiamine diphosphate biosynthesis. Functionally, catalyzes the rearrangement of 1-deoxy-D-xylulose 5-phosphate (DXP) to produce the thiazole phosphate moiety of thiamine. Sulfur is provided by the thiocarboxylate moiety of the carrier protein ThiS. In vitro, sulfur can be provided by H(2)S. The sequence is that of Thiazole synthase from Vibrio vulnificus (strain CMCP6).